The sequence spans 113 residues: UPF0342 protein SMU_782 (113 aa).

The protein belongs to the UPF0342 family.

This is UPF0342 protein SMU_782 from Streptococcus mutans serotype c (strain ATCC 700610 / UA159).